Consider the following 239-residue polypeptide: MGRKWNNIKDKKASKDANTSRIYAKFGREIYVAAKQGEPDPESNQALRVVLERAKTYNVPRTIIDRAVEKAKGGSEENYDELRYEGFGPNGAMVIVDTLTNNVNRTAADVRAAFSKNSGNMGVNGSVAYMFDATAVIGLEGKTSDEVLEILMEADVDARDILEEEDAVIVYAEPEQFHAVQSALKDAGVEEFTVAELTMLAQNDVTLPEDAQAQFEKMVDALEDLEDVQQVYHNVDLGE.

This sequence belongs to the TACO1 family. YeeN subfamily.

Its subcellular location is the cytoplasm. This chain is Probable transcriptional regulatory protein BT9727_0453, found in Bacillus thuringiensis subsp. konkukian (strain 97-27).